We begin with the raw amino-acid sequence, 845 residues long: Ribonucleoside-diphosphate reductase subunit alpha (845 aa).

The ATP-cone domain occupies 1–98 (MHIIKRNGEP…LYRDDRTKKR (98 aa)). Substrate is bound by residues Thr-303, 318 to 319 (SC), Gly-347, 534 to 538 (NLCTE), and 725 to 729 (PTSST). Cys-319 and Cys-574 form a disulfide bridge. Residue Asn-534 is the Proton acceptor of the active site. Cys-536 acts as the Cysteine radical intermediate in catalysis. Glu-538 functions as the Proton acceptor in the catalytic mechanism.

This sequence belongs to the ribonucleoside diphosphate reductase large chain family. As to quaternary structure, tetramer of two alpha and two beta subunits.

It catalyses the reaction a 2'-deoxyribonucleoside 5'-diphosphate + [thioredoxin]-disulfide + H2O = a ribonucleoside 5'-diphosphate + [thioredoxin]-dithiol. With respect to regulation, under complex allosteric control mediated by deoxynucleoside triphosphates and ATP binding. The type of nucleotide bound at the specificity site determines substrate preference. It seems probable that ATP makes the enzyme reduce CDP and UDP, dGTP favors ADP reduction and dTTP favors GDP reduction. Functionally, provides the precursors necessary for DNA synthesis. Catalyzes the biosynthesis of deoxyribonucleotides from the corresponding ribonucleotides. The protein is Ribonucleoside-diphosphate reductase subunit alpha (nrdA) of Treponema pallidum (strain Nichols).